We begin with the raw amino-acid sequence, 353 residues long: Rhodopsin (353 aa).

Residues 1 to 36 are Extracellular-facing; that stretch reads MNGTEGPYFYIPMVNTTGIVRSPYEYPQYYLVNPAA. Residues Asn2 and Asn15 are each glycosylated (N-linked (GlcNAc...) asparagine). Residues 37-61 traverse the membrane as a helical segment; that stretch reads YAALGAYMFLLILVGFPINFLTLYV. The Cytoplasmic portion of the chain corresponds to 62-73; it reads TIEHKKLRTPLN. A helical transmembrane segment spans residues 74–96; that stretch reads YILLNLAVANLFMVFGGFTTTMY. Topologically, residues 97–110 are extracellular; the sequence is TSMHGYFVLGRLGC. Cys110 and Cys187 form a disulfide bridge. The chain crosses the membrane as a helical span at residues 111–133; it reads NLEGFFATLGGEIALWSLVVLAI. The 'Ionic lock' involved in activated form stabilization motif lies at 134 to 136; it reads ERW. The Cytoplasmic segment spans residues 134-152; sequence ERWMVVCKPISNFRFGEDH. A helical membrane pass occupies residues 153-173; the sequence is AIMGLAFTWVMAAACAVPPLV. The Extracellular segment spans residues 174 to 202; sequence GWSRYIPEGMQCSCGIDYYTRAEGFNNES. Asn200 carries an N-linked (GlcNAc...) asparagine glycan. The helical transmembrane segment at 203–224 threads the bilayer; the sequence is FVIYMFVCHFLIPLVVVFFCYG. The Cytoplasmic segment spans residues 225-252; the sequence is RLLCAVKEAAAAQQESETTQRAEREVSR. Residues 253–274 traverse the membrane as a helical segment; the sequence is MVVIMVVAFLICWCPYAGVAWY. The Extracellular segment spans residues 275-286; that stretch reads IFTHQGSEFGPL. A helical membrane pass occupies residues 287 to 308; that stretch reads FMTFPAFFAKSSSIYNPMIYIC. Residue Lys296 is modified to N6-(retinylidene)lysine. Residues 309 to 353 are Cytoplasmic-facing; the sequence is MNKQFRHCMITTLCCGKNPFEEEEGASTTSKTEASSVSSSSVSPA. S-palmitoyl cysteine attachment occurs at residues Cys322 and Cys323. The segment at 330–353 is disordered; it reads EEEGASTTSKTEASSVSSSSVSPA. Residues 334–353 show a composition bias toward low complexity; the sequence is ASTTSKTEASSVSSSSVSPA.

The protein belongs to the G-protein coupled receptor 1 family. Opsin subfamily. Post-translationally, phosphorylated on some or all of the serine and threonine residues present in the C-terminal region. Contains one covalently linked retinal chromophore.

Its subcellular location is the membrane. It localises to the cell projection. The protein localises to the cilium. It is found in the photoreceptor outer segment. Functionally, photoreceptor required for image-forming vision at low light intensity. While most salt water fish species use retinal as chromophore, most freshwater fish use 3-dehydroretinal, or a mixture of retinal and 3-dehydroretinal. Light-induced isomerization of 11-cis to all-trans retinal triggers a conformational change that activates signaling via G-proteins. Subsequent receptor phosphorylation mediates displacement of the bound G-protein alpha subunit by arrestin and terminates signaling. The protein is Rhodopsin (rho) of Chelon saliens (Leaping mullet).